A 3015-amino-acid polypeptide reads, in one-letter code: Genome polyprotein (3015 aa).

At Ser-2 the chain carries N-acetylserine; by host. An interaction with STAT1 region spans residues 2–23 (STLPKPQRKTKRNTNRRPMDVK). Positions 2–58 (STLPKPQRKTKRNTNRRPMDVKFPGGGQIVGGVYLLPRRGPRLGVRATRKTSERSQP) are interaction with EIF2AK2/PKR. The interaction with DDX3X stretch occupies residues 2 to 59 (STLPKPQRKTKRNTNRRPMDVKFPGGGQIVGGVYLLPRRGPRLGVRATRKTSERSQPR). Positions 2 to 75 (STLPKPQRKT…PKARQPIGRS (74 aa)) are disordered. Over 2 to 168 (STLPKPQRKT…EDGVNYATGN (167 aa)) the chain is Cytoplasmic. Short sequence motifs (nuclear localization signal) lie at residues 5–13 (PKPQRKTKR) and 38–43 (PRRGPR). The span at 7 to 16 (PQRKTKRNTN) shows a compositional bias: basic residues. Positions 32-47 (GGVYLLPRRGPRLGVR) are enriched in low complexity. Ser-53 is subject to Phosphoserine; by host. Short sequence motifs (nuclear localization signal) lie at residues 58–64 (PRGRRQP) and 66–71 (PKARQP). 2 positions are modified to phosphoserine; by host: Ser-99 and Ser-116. The important for endoplasmic reticulum and mitochondrial localization stretch occupies residues 112 to 152 (PRRRSRNLGKVIDTLTCGLADLMGYIPVLGGPLGGVAAALA). The interaction with APOA2 stretch occupies residues 122-173 (VIDTLTCGLADLMGYIPVLGGPLGGVAAALAHGVRAIEDGVNYATGNLPGCS). The segment at 164 to 167 (YATG) is important for lipid droplets localization. The helical transmembrane segment at 169–189 (LPGCSFSIFLLALLSCLTTPA) threads the bilayer. A propeptide spans 178 to 191 (LLALLSCLTTPASA) (ER anchor for the core protein, removed in mature form by host signal peptidase). Topologically, residues 190-358 (SAIQVRNASG…TGAHWGVLGA (169 aa)) are lumenal. Asn-196, Asn-209, Asn-234, and Asn-250 each carry an N-linked (GlcNAc...) asparagine; by host glycan. Positions 265–296 (LVGAAAFCSAMYIGDLCGSVFLVGQLFTFRPK) are important for fusion. A glycan (N-linked (GlcNAc...) asparagine; by host) is linked at Asn-305. A helical membrane pass occupies residues 359 to 379 (LLYFSMVANWAKVIAVLFLFA). The Lumenal segment spans residues 380–726 (GADATTYTGS…WEYVVLAFLV (347 aa)). The HVR1 stretch occupies residues 385-411 (TYTGSAVSSTTGAFVSLFSPGPTQNLQ). 3 N-linked (GlcNAc...) (high mannose) asparagine; by host glycosylation sites follow: Asn-416, Asn-422, and Asn-429. Disulfide bonds link Cys-428-Cys-552, Cys-451-Cys-458, Cys-486-Cys-494, and Cys-503-Cys-508. N-linked (GlcNAc...) asparagine; by host glycosylation is present at Asn-447. The HVR2 stretch occupies residues 474-478 (VNISG). Asn-475 carries an N-linked (GlcNAc...) asparagine; by host glycan. The interval 480 to 493 (SEDKPYCWHYAPRP) is CD81-binding 1. An N-linked (GlcNAc...) asparagine; by host glycan is attached at Asn-532. A CD81-binding 2 region spans residues 544–551 (PPLGAWFG). Residue Asn-556 is glycosylated (N-linked (GlcNAc...) asparagine; by host). Cystine bridges form between Cys-564-Cys-569, Cys-582-Cys-586, Cys-598-Cys-621, and Cys-608-Cys-645. Residues Asn-624 and Asn-646 are each glycosylated (N-linked (GlcNAc...) (high mannose) asparagine; by host). An intrachain disulfide couples Cys-653 to Cys-678. Positions 661 to 672 (FEMSPLLFSTTQ) are PKR/eIF2-alpha phosphorylation homology domain (PePHD). A helical transmembrane segment spans residues 727–747 (LADARVCACLWLMFLVGQAEA). Over 748 to 758 (ALENVIVLNAA) the chain is Lumenal. Residues 759–779 (SAASCQGLLWGLIFICCAWHV) traverse the membrane as a helical segment. Topologically, residues 780-783 (RGRA) are cytoplasmic. Residues 784 to 804 (VPVTTYALLQLWPLLLLILAL) form a helical membrane-spanning segment. Topologically, residues 805–814 (PRRAYAFDSE) are lumenal. The helical transmembrane segment at 815–835 (QAASAGLLVLGLITIFTLTPA) threads the bilayer. Over 836–882 (YKQLLISMLWWIQYFIALTEAQLHQWVPSLLVRGGRDAVILLACLFH) the chain is Cytoplasmic. The helical transmembrane segment at 883-903 (PQLGFEVTKILLALLGPLYLL) threads the bilayer. Topologically, residues 904-929 (QYSLLKTPYFVRAHILLRACMFFRGM) are lumenal. One can recognise a Peptidase C18 domain in the interval 904 to 1027 (QYSLLKTPYF…DVKGKGWRLL (124 aa)). The tract at residues 905-1207 (YSLLKTPYFV…PVESMQSSQR (303 aa)) is protease NS2-3. Cys-923 carries the S-palmitoyl cysteine; by host lipid modification. Residues 930-950 (ARGRYAQAILLRIGAWTGTYI) traverse the membrane as a helical segment. The interaction with host SCPS1 stretch occupies residues 930–950 (ARGRYAQAILLRIGAWTGTYI). The Cytoplasmic segment spans residues 951-1658 (YDHLAPLSDW…CMSADLEVIT (708 aa)). Catalysis depends on for protease NS2 activity; shared with dimeric partner residues His-953, Glu-973, and Cys-994. The Peptidase S29 domain occupies 1028-1209 (APITAYAQQT…ESMQSSQRSP (182 aa)). Asp-1108 serves as the catalytic Charge relay system; for serine protease NS3 activity. Positions 1124 and 1126 each coordinate Zn(2+). The active-site Charge relay system; for serine protease NS3 activity is the Ser-1166. Residues Cys-1172 and His-1176 each contribute to the Zn(2+) site. The 153-residue stretch at 1218–1370 (PAVPQTYQVG…PNITESALPT (153 aa)) folds into the Helicase ATP-binding domain. Residue 1231-1238 (APTGSGKS) participates in ATP binding. Mg(2+) contacts are provided by Ser-1238 and Glu-1318. Positions 1317-1320 (DECH) match the DECH box motif. Residues 1487 to 1499 (QRRGRTGRGKHGV) form an RNA-binding region. Residues 1659 to 1679 (STWVLVGGVVAALAAYCLSVG) traverse the membrane as a helical segment. The segment at 1680–1691 (CVVICGRISTSG) is NS3-binding. Residues 1680-1806 (CVVICGRIST…SLTSPLSTHQ (127 aa)) are Cytoplasmic-facing. The chain crosses the membrane as a helical span at residues 1807–1827 (TLLLNILGGWVASQLANPTAS). Over 1828-1829 (TA) the chain is Lumenal. A helical membrane pass occupies residues 1830–1850 (FVVSGLAGAAVGSIGLGRVIV). Asp-1851 is a topological domain (cytoplasmic). The helical transmembrane segment at 1852–1872 (VLAGYGAGVSGALVAFKIMCG) threads the bilayer. At 1873–1882 (ETPSAEDMVN) the chain is on the lumenal side. Residues 1883 to 1903 (LLPALLSPGALVVGVVCAAIL) traverse the membrane as a helical segment. Residues 1904-1973 (RRHAGPSEGA…WINTDWSTPC (70 aa)) lie on the Cytoplasmic side of the membrane. Residue Cys-1973 is the site of S-palmitoyl cysteine; by host attachment. An intramembrane segment occupies 1974-2003 (SSSWLRDIWDWVCEVLSDFKTWLKAKLVPA). At 2004-2994 (LPGVPFLSCQ…YHSASRARPR (991 aa)) the chain is on the cytoplasmic side. Residues Cys-2012, Cys-2030, Cys-2032, and Cys-2053 each coordinate Zn(2+). Residues 2121 to 2209 (EFFTEVDGVR…ASSSASQLSA (89 aa)) are FKBP8-binding. The segment at 2121 to 2334 (EFFTEVDGVR…PIPPPRRKKV (214 aa)) is transcriptional activation. The interaction with non-structural protein 4A stretch occupies residues 2136-2140 (PRCKP). An interaction with host SKP2 region spans residues 2190 to 2442 (RLARGSPPSL…ALVTPCAAEE (253 aa)). Phosphoserine; by host occurs at positions 2195, 2198, 2202, 2205, 2208, and 2211. Residues 2211–2250 (SLKATCTMHGAHPDAELIEANLLWRQEMGGNITRVESENK) are ISDR. The segment at 2211–2276 (SLKATCTMHG…REMSVPAECH (66 aa)) is interaction with EIF2AK2/PKR. An NS4B-binding region spans residues 2250–2308 (KVVILDSFDPLVPEFEEREMSVPAECHRPRRPKFPPALPIWATPGYNPPVLETWKSPTY). Residues 2301-2378 (ETWKSPTYEP…PDHSTESSEH (78 aa)) are V3. 2 disordered regions span residues 2319–2338 (PPSGPPPIPPPRRKKVVQLD) and 2352–2413 (KTFE…SWST). An SH3-binding motif is present at residues 2324 to 2327 (PPIP). A Nuclear localization signal motif is present at residues 2329 to 2337 (PRRKKVVQL). Residue Lys-2352 forms a Glycyl lysine isopeptide (Lys-Gly) (interchain with G-Cter in ubiquitin) linkage. A compositionally biased stretch (polar residues) spans 2355 to 2365 (ETPSSPTTGYG). Residues 2368 to 2383 (QPDHSTESSEHDRDDG) show a composition bias toward basic and acidic residues. Phosphoserine; by host occurs at positions 2453 and 2466. One can recognise a RdRp catalytic domain in the interval 2638-2756 (PMGFSYDTRC…VTESAGVNED (119 aa)). Positions 2644, 2742, and 2743 each coordinate Mg(2+). A helical transmembrane segment spans residues 2995-3015 (FLLLCLLLLSVGVGIFLLPAR).

The protein belongs to the hepacivirus polyprotein family. As to quaternary structure, homooligomer. Interacts with E1 (via C-terminus). Interacts with the non-structural protein 5A. Interacts (via N-terminus) with host STAT1 (via SH2 domain); this interaction results in decreased STAT1 phosphorylation and ubiquitin-mediated proteasome-dependent STAT1 degradation, leading to decreased IFN-stimulated gene transcription. Interacts with host STAT3; this interaction constitutively activates STAT3. Interacts with host LTBR receptor. Interacts with host TNFRSF1A receptor and possibly induces apoptosis. Interacts with host HNRPK. Interacts with host YWHAE. Interacts with host UBE3A/E6AP. Interacts with host DDX3X. Interacts with host APOA2. Interacts with host RXRA protein. Interacts with host SP110 isoform 3/Sp110b; this interaction sequesters the transcriptional corepressor SP110 away from the nucleus. Interacts with host CREB3 nuclear transcription protein; this interaction triggers cell transformation. Interacts with host ACY3. Interacts with host C1QR1. Interacts with host RBM24; this interaction, which enhances the interaction of the mature core protein with 5'-UTR, may inhibit viral translation and favor replication. Interacts with host EIF2AK2/PKR; this interaction induces the autophosphorylation of EIF2AK2. Part of the viral assembly initiation complex composed of NS2, E1, E2, NS3, NS4A, NS5A and the mature core protein. In terms of assembly, forms a heterodimer with envelope glycoprotein E2. Interacts with mature core protein. Interacts with protease NS2. The heterodimer E1/E2 interacts with host CLDN1; this interaction plays a role in viral entry into host cell. Interacts with host SPSB2 (via C-terminus). Part of the viral assembly initiation complex composed of NS2, E1, E2, NS3, NS4A, NS5A and the mature core protein. Interacts with host NEURL3; this interaction prevents E1 binding to glycoprotein E2. Forms a heterodimer with envelope glycoprotein E1. Interacts with host CD81 and SCARB1 receptors; these interactions play a role in viral entry into host cell. Interacts with host EIF2AK2/PKR; this interaction inhibits EIF2AK2 and probably allows the virus to evade the innate immune response. Interacts with host CD209/DC-SIGN and CLEC4M/DC-SIGNR. Interact with host SPCS1; this interaction is essential for viral particle assembly. Interacts with protease NS2. The heterodimer E1/E2 interacts with host CLDN1; this interaction plays a role in viral entry into host cell. Part of the viral assembly initiation complex composed of NS2, E1, E2, NS3, NS4A, NS5A and the mature core protein. Interacts with host SLC3A2/4F2hc; the interaction may facilitate viral entry into host cell. Interacts with human PLSCR1. As to quaternary structure, homohexamer. Homoheptamer. Interacts with protease NS2. In terms of assembly, homodimer. Interacts with host SPCS1; this interaction is essential for viral particle assembly. Interacts with envelope glycoprotein E1. Interacts with envelope glycoprotein E2. Interacts with viroporin p7. Interacts with serine protease/helicase NS3. Part of the replication complex composed of NS2, NS3, NS4A, NS4B, NS5A and the RNA-directed RNA polymerase embedded in an ER-derived membranous web. Part of the viral assembly initiation complex composed of NS2, E1, E2, NS3, NS4A, NS5A and the mature core protein. Interacts with protease NS2. Interacts with non-structural protein 4A; this interaction stabilizes the folding of NS3 serine protease. NS3-NS4A interaction is essential for NS3 activation and allows membrane anchorage of the latter. NS3/NS4A complex also prevents phosphorylation of host IRF3, thus preventing the establishment of dsRNA induced antiviral state. Interacts with host MAVS; this interaction leads to the cleavage and inhibition of host MAVS. Interacts with host TICAM1; this interaction leads to the cleavage and inhibition of host TICAM1. Interacts with host TANK-binding kinase/TBK1; this interaction results in the inhibition of the association between TBK1 and IRF3, which leads to the inhibition of IRF3 activation. Interacts with host RBM24. Part of the replication complex composed of NS2, NS3, NS4A, NS4B, NS5A and the RNA-directed RNA polymerase embedded in an ER-derived membranous web. Part of the viral assembly initiation complex composed of NS2, E1, E2, NS3, NS4A, NS5A and the mature core protein. As to quaternary structure, interacts with NS3 serine protease; this interaction stabilizes the folding of NS3 serine protease. NS3-NS4A interaction is essential for NS3 activation and allows membrane anchorage of the latter. Interacts with non-structural protein 5A (via N-terminus). Part of the replication complex composed of NS2, NS3, NS4A, NS4B, NS5A and the RNA-directed RNA polymerase embedded in an ER-derived membranous web. Part of the viral assembly initiation complex composed of NS2, E1, E2, NS3, NS4A, NS5A and the mature core protein. In terms of assembly, homomultimer. Interacts with non-structural protein NS5A. Interacts with host PLA2G4C; this interaction likely initiates the recruitment of replication complexes to lipid droplets. Interacts with host STING; this interaction disrupts the interaction between STING and TBK1 thereby suppressing the interferon signaling. Part of the replication complex composed of NS2, NS3, NS4A, NS4B, NS5A and the RNA-directed RNA polymerase embedded in an ER-derived membranous web. Monomer. Homodimer; dimerization is required for RNA-binding. Interacts with the mature core protein. Interacts (via N-terminus) with non-structural protein 4A. Interacts with non-structural protein 4B. Interacts (via region D2) with RNA-directed RNA polymerase. Part of the viral assembly initiation complex composed of NS2, E1, E2, NS3, NS4A, NS5A and the mature core protein. Part of the replication complex composed of NS2, NS3, NS4A, NS4B, NS5A and the RNA-directed RNA polymerase embedded in an ER-derived membranous web. Interacts with host GRB2. Interacts with host BIN1. Interacts with host PIK3R1. Interacts with host SRCAP. Interacts with host FKBP8. Interacts (via C-terminus) with host VAPB (via MSP domain). Interacts with host EIF2AK2/PKR; this interaction leads to disruption of EIF2AK2 dimerization by NS5A and probably allows the virus to evade the innate immune response. Interacts (via N-terminus) with host PACSIN2 (via N-terminus); this interaction attenuates protein kinase C alpha-mediated phosphorylation of PACSIN2 by disrupting the interaction between PACSIN2 and PRKCA. Interacts (via N-terminus) with host SRC kinase (via SH2 domain). Interacts with most Src-family kinases. Interacts with host IFI27 and SKP2; promotes the ubiquitin-mediated proteasomal degradation of NS5A. Interacts with host GPS2. Interacts with host TNFRSF21; this interaction allows the modulation by the virus of JNK, p38 MAPK, STAT3, and Akt signaling pathways in a DR6-dependent manner. Interacts (via N-terminus) with host CIDEB (via N-terminus); this interaction seems to regulate the association of HCV particles with APOE. Interacts with host CHKA/Choline Kinase-alpha; CHKA bridges host PI4KA and NS5A and potentiates NS5A-stimulated PI4KA activity, which then facilitates the targeting of the ternary complex to the ER for viral replication. Interacts with host SPSB2 (via C-terminus); this interaction targets NS5A for ubiquitination and degradation. Interacts with host RAB18; this interaction may promote the association of NS5A and other replicase components with lipid droplets. Interacts (via region D2) with host PPIA/CYPA; the interaction stimulates RNA-binding ability of NS5A and is dependent on the peptidyl-prolyl cis-trans isomerase activity of PPIA/CYPA. Interacts with host TRIM14; this interaction induces the degradation of NS5A. As to quaternary structure, homooligomer. Interacts with non-structural protein 5A. Interacts with host VAPB. Interacts with host PRK2/PKN2. Interacts with host HNRNPA1 and SEPT6; these interactions facilitate viral replication. Part of the replication complex composed of NS2, NS3, NS4A, NS4B, NS5A and the RNA-directed RNA polymerase. Zn(2+) serves as cofactor. Mg(2+) is required as a cofactor. Specific enzymatic cleavages in vivo yield mature proteins. The structural proteins, core, E1, E2 and p7 are produced by proteolytic processing by host signal peptidases. The core protein precursor is synthesized as a 23 kDa, which is retained in the ER membrane through the hydrophobic signal peptide. Cleavage by the signal peptidase releases the 21 kDa mature core protein. The cleavage of the core protein precursor occurs between aminoacids 176 and 188 but the exact cleavage site is not known. Some degraded forms of the core protein appear as well during the course of infection. The other proteins (p7, NS2, NS3, NS4A, NS4B, NS5A and NS5B) are cleaved by the viral proteases. Autoprocessing between NS2 and NS3 is mediated by the NS2 cysteine protease catalytic domain and regulated by the NS3 N-terminal domain. Post-translationally, phosphorylated by host PKC and PKA. In terms of processing, ubiquitinated; mediated by UBE3A and leading to core protein subsequent proteasomal degradation. Highly N-glycosylated. Post-translationally, palmitoylation is required for NS2/3 autoprocessing and E2 recruitment to membranes. In terms of processing, palmitoylated. This modification may play a role in its polymerization or in protein-protein interactions. Phosphorylated on serines in a basal form termed p56. p58 is a hyperphosphorylated form of p56. p56 and p58 coexist in the cell in roughly equivalent amounts. Hyperphosphorylation is dependent on the presence of NS4A. Host CSNK1A1/CKI-alpha or RPS6KB1 kinases may be responsible for NS5A phosphorylation. Post-translationally, tyrosine phosphorylation is essential for the interaction with host SRC. In terms of processing, ubiquitinated. Ubiquitination, most probably at Lys-2352, mediated by host IFI27 and SKP2 leads to proteasomal degradation, restricting viral infection. Ubiquitination by host TRIM22 leads to interruption of viral replication. The N-terminus is phosphorylated by host PRK2/PKN2.

The protein resides in the host endoplasmic reticulum membrane. It is found in the host mitochondrion membrane. It localises to the virion. Its subcellular location is the host cytoplasm. The protein localises to the host nucleus. The protein resides in the host lipid droplet. It is found in the virion membrane. It localises to the host mitochondrion. Its subcellular location is the host cell membrane. The protein localises to the host perinuclear region. It carries out the reaction Hydrolysis of four peptide bonds in the viral precursor polyprotein, commonly with Asp or Glu in the P6 position, Cys or Thr in P1 and Ser or Ala in P1'.. The catalysed reaction is a ribonucleoside 5'-triphosphate + H2O = a ribonucleoside 5'-diphosphate + phosphate + H(+). The enzyme catalyses ATP + H2O = ADP + phosphate + H(+). It catalyses the reaction RNA(n) + a ribonucleoside 5'-triphosphate = RNA(n+1) + diphosphate. Its activity is regulated as follows. Inhibited by the antiviral drug hexamethylene amiloride. Inhibition by amantadine appears to be genotype-dependent. Also inhibited by long-alkyl-chain iminosugar derivatives. With respect to regulation, activity is up-regulated by PRK2/PKN2-mediated phosphorylation. In terms of biological role, packages viral RNA to form a viral nucleocapsid, and promotes virion budding. Participates in the viral particle production as a result of its interaction with the non-structural protein 5A. Binds RNA and may function as a RNA chaperone to induce the RNA structural rearrangements taking place during virus replication. Modulates viral translation initiation by interacting with viral IRES and 40S ribosomal subunit. Affects various cell signaling pathways, host immunity and lipid metabolism. Prevents the establishment of cellular antiviral state by blocking the interferon-alpha/beta (IFN-alpha/beta) and IFN-gamma signaling pathways and by blocking the formation of phosphorylated STAT1 and promoting ubiquitin-mediated proteasome-dependent degradation of STAT1. Activates STAT3 leading to cellular transformation. Regulates the activity of cellular genes, including c-myc and c-fos. May repress the promoter of p53, and sequester CREB3 and SP110 isoform 3/Sp110b in the cytoplasm. Represses cell cycle negative regulating factor CDKN1A, thereby interrupting an important check point of normal cell cycle regulation. Targets transcription factors involved in the regulation of inflammatory responses and in the immune response: suppresses TNF-induced NF-kappa-B activation, and activates AP-1. Binds to dendritic cells (DCs) via C1QR1, resulting in down-regulation of T-lymphocytes proliferation. Alters lipid metabolism by interacting with hepatocellular proteins involved in lipid accumulation and storage. Induces up-regulation of FAS promoter activity, and thereby contributes to the increased triglyceride accumulation in hepatocytes (steatosis). Forms a heterodimer with envelope glycoprotein E2, which mediates virus attachment to the host cell, virion internalization through clathrin-dependent endocytosis and fusion with host membrane. Fusion with the host cell is most likely mediated by both E1 and E2, through conformational rearrangements of the heterodimer required for fusion rather than a classical class II fusion mechanism. E1/E2 heterodimer binds host apolipoproteins such as APOB and ApoE thereby forming a lipo-viro-particle (LVP). APOE associated to the LVP allows the initial virus attachment to cell surface receptors such as the heparan sulfate proteoglycans (HSPGs), syndecan-1 (SDC1), syndecan-1 (SDC2), the low-density lipoprotein receptor (LDLR) and scavenger receptor class B type I (SCARB1). The cholesterol transfer activity of SCARB1 allows E2 exposure and binding of E2 to SCARB1 and the tetraspanin CD81. E1/E2 heterodimer binding on CD81 activates the epithelial growth factor receptor (EGFR) signaling pathway. Diffusion of the complex E1-E2-EGFR-SCARB1-CD81 to the cell lateral membrane allows further interaction with Claudin 1 (CLDN1) and occludin (OCLN) to finally trigger HCV entry. Its function is as follows. Forms a heterodimer with envelope glycoprotein E1, which mediates virus attachment to the host cell, virion internalization through clathrin-dependent endocytosis and fusion with host membrane. Fusion with the host cell is most likely mediated by both E1 and E2, through conformational rearrangements of the heterodimer required for fusion rather than a classical class II fusion mechanism. The interaction between envelope glycoprotein E2 and host apolipoprotein E/APOE allows the proper assembly, maturation and infectivity of the viral particles. This interaction is probably promoted via the up-regulation of cellular autophagy by the virus. E1/E2 heterodimer binds host apolipoproteins such as APOB and APOE thereby forming a lipo-viro-particle (LVP). APOE associated to the LVP allows the initial virus attachment to cell surface receptors such as the heparan sulfate proteoglycans (HSPGs), syndecan-1 (SDC1), syndecan-1 (SDC2), the low-density lipoprotein receptor (LDLR) and scavenger receptor class B type I (SCARB1). The cholesterol transfer activity of SCARB1 allows E2 exposure and binding of E2 to SCARB1 and the tetraspanin CD81. E1/E2 heterodimer binding on CD81 activates the epithelial growth factor receptor (EGFR) signaling pathway. Diffusion of the complex E1-E2-EGFR-SCARB1-CD81 to the cell lateral membrane allows further interaction with Claudin 1 (CLDN1) and occludin (OCLN) to finally trigger HCV entry. Inhibits host EIF2AK2/PKR activation, preventing the establishment of an antiviral state. Viral ligand for CD209/DC-SIGN and CLEC4M/DC-SIGNR, which are respectively found on dendritic cells (DCs), and on liver sinusoidal endothelial cells and macrophage-like cells of lymph node sinuses. These interactions allow the capture of circulating HCV particles by these cells and subsequent facilitated transmission to permissive cells such as hepatocytes and lymphocyte subpopulations. The interaction between E2 and host amino acid transporter complex formed by SLC3A2 and SLC7A5/LAT1 may facilitate viral entry into host cell. Functionally, ion channel protein that acts as a viroporin and plays an essential role in the assembly, envelopment and secretion of viral particles. Regulates the host cell secretory pathway, which induces the intracellular retention of viral glycoproteins and favors assembly of viral particles. Creates a pore in acidic organelles and releases Ca(2+) and H(+) in the cytoplasm of infected cells, leading to a productive viral infection. High levels of cytoplasmic Ca(2+) may trigger membrane trafficking and transport of viral ER-associated proteins to viroplasms, sites of viral genome replication. This ionic imbalance induces the assembly of the inflammasome complex, which triggers the maturation of pro-IL-1beta into IL-1beta through the action of caspase-1. Targets also host mitochondria and induces mitochondrial depolarization. In addition of its role as a viroporin, acts as a lipid raft adhesion factor. In terms of biological role, cysteine protease required for the proteolytic auto-cleavage between the non-structural proteins NS2 and NS3. The N-terminus of NS3 is required for the function of NS2 protease (active region NS2-3). Promotes the initiation of viral particle assembly by mediating the interaction between structural and non-structural proteins. Displays three enzymatic activities: serine protease with a chymotrypsin-like fold, NTPase and RNA helicase. NS3 serine protease, in association with NS4A, is responsible for the cleavages of NS3-NS4A, NS4A-NS4B, NS4B-NS5A and NS5A-NS5B. The NS3/NS4A complex prevents phosphorylation of host IRF3, thus preventing the establishment of dsRNA induced antiviral state. The NS3/NS4A complex induces host amino acid transporter component SLC3A2, thus contributing to HCV propagation. NS3 RNA helicase binds to RNA and unwinds both dsDNA and dsRNA in the 3' to 5' direction, and likely resolves RNA complicated stable secondary structures in the template strand. Binds a single ATP and catalyzes the unzipping of a single base pair of dsRNA. Inhibits host antiviral proteins TBK1 and IRF3 thereby preventing the establishment of an antiviral state. Cleaves host MAVS/CARDIF thereby preventing the establishment of an antiviral state. Cleaves host TICAM1/TRIF, thereby disrupting TLR3 signaling and preventing the establishment of an antiviral state. Its function is as follows. Peptide cofactor which forms a non-covalent complex with the N-terminal of NS3 serine protease. The NS3/NS4A complex prevents phosphorylation of host IRF3, thus preventing the establishment of dsRNA induced antiviral state. The NS3/NS4A complex induces host amino acid transporter component SLC3A2, thus contributing to HCV propagation. Functionally, induces a specific membrane alteration that serves as a scaffold for the virus replication complex. This membrane alteration gives rise to the so-called ER-derived membranous web that contains the replication complex. NS4B self-interaction contributes to its function in membranous web formation. Promotes host TRIF protein degradation in a CASP8-dependent manner thereby inhibiting host TLR3-mediated interferon signaling. Disrupts the interaction between STING and TBK1 contributing to the inhibition of interferon signaling. In terms of biological role, phosphorylated protein that is indispensable for viral replication and assembly. Both hypo- and hyperphosphorylated states are required for the viral life cycle. The hyperphosphorylated form of NS5A is an inhibitor of viral replication. Involved in RNA-binding and especially in binding to the viral genome. Zinc is essential for RNA-binding. Participates in the viral particle production as a result of its interaction with the mature viral core protein. Its interaction with host VAPB may target the viral replication complex to vesicles. Down-regulates viral IRES translation initiation. Mediates interferon resistance, presumably by interacting with and inhibiting host EIF2AK2/PKR. Prevents BIN1-induced apoptosis. Acts as a transcriptional activator of some host genes important for viral replication when localized in the nucleus. Via the interaction with host PACSIN2, modulates lipid droplet formation in order to promote virion assembly. Modulates TNFRSF21/DR6 signaling pathway for viral propagation. RNA-dependent RNA polymerase that performs primer-template recognition and RNA synthesis during viral replication. Initiates RNA transcription/replication at a flavin adenine dinucleotide (FAD), resulting in a 5'- FAD cap on viral RNAs. In this way, recognition of viral 5' RNA by host pattern recognition receptors can be bypassed, thereby evading activation of antiviral pathways. The chain is Genome polyprotein from Hepatitis C virus genotype 6h (isolate VN004) (HCV).